A 175-amino-acid chain; its full sequence is Gamma-crystallin B (175 aa).

Beta/gamma crystallin 'Greek key' domains are found at residues 2-40 (GKITFYEDRGFQGHCYECSSDCPNLQPYFSRCNSIRVDS) and 41-83 (GCWM…RLIP). Residue Lys-3 is glycosylated (N-linked (Glc) (glycation) lysine; in vitro). An intrachain disulfide couples Cys-19 to Cys-23. Positions 84-88 (QHTGT) are connecting peptide. 2 Beta/gamma crystallin 'Greek key' domains span residues 89–129 (FRMR…NVLE) and 130–172 (GSWV…RRVM).

This sequence belongs to the beta/gamma-crystallin family.

In terms of biological role, crystallins are the dominant structural components of the vertebrate eye lens. The protein is Gamma-crystallin B (CRYGB) of Bos taurus (Bovine).